Here is a 58-residue protein sequence, read N- to C-terminus: Small ribosomal subunit protein bS21 (58 aa).

A disordered region spans residues 37–58 (FYDKPSVKKRAKSKAAAKYRGR). Residues 43 to 58 (VKKRAKSKAAAKYRGR) are compositionally biased toward basic residues.

The protein belongs to the bacterial ribosomal protein bS21 family.

The sequence is that of Small ribosomal subunit protein bS21 (rpsU) from Chlamydia muridarum (strain MoPn / Nigg).